The chain runs to 161 residues: Ribonuclease P protein component (161 aa).

This sequence belongs to the RnpA family. Consists of a catalytic RNA component (M1 or rnpB) and a protein subunit.

The catalysed reaction is Endonucleolytic cleavage of RNA, removing 5'-extranucleotides from tRNA precursor.. RNaseP catalyzes the removal of the 5'-leader sequence from pre-tRNA to produce the mature 5'-terminus. It can also cleave other RNA substrates such as 4.5S RNA. The protein component plays an auxiliary but essential role in vivo by binding to the 5'-leader sequence and broadening the substrate specificity of the ribozyme. The polypeptide is Ribonuclease P protein component (Helicobacter pylori (strain J99 / ATCC 700824) (Campylobacter pylori J99)).